The sequence spans 98 residues: NADH-ubiquinone oxidoreductase chain 4L (98 aa).

The next 3 helical transmembrane spans lie at 1–21 (MSLTYFNVMLAFTMSFLGLLM), 30–50 (LLCLEGLMLSLFVLVTITILI), and 61–81 (IILLVFAACEAALGLSLLVAV).

Belongs to the complex I subunit 4L family. Core subunit of respiratory chain NADH dehydrogenase (Complex I) which is composed of 45 different subunits.

The protein resides in the mitochondrion inner membrane. It catalyses the reaction a ubiquinone + NADH + 5 H(+)(in) = a ubiquinol + NAD(+) + 4 H(+)(out). Its function is as follows. Core subunit of the mitochondrial membrane respiratory chain NADH dehydrogenase (Complex I) which catalyzes electron transfer from NADH through the respiratory chain, using ubiquinone as an electron acceptor. Part of the enzyme membrane arm which is embedded in the lipid bilayer and involved in proton translocation. The polypeptide is NADH-ubiquinone oxidoreductase chain 4L (MT-ND4L) (Pipistrellus abramus (Japanese pipistrelle)).